Consider the following 566-residue polypeptide: NAD-dependent malic enzyme (566 aa).

Tyr105 serves as the catalytic Proton donor. Arg158 contributes to the NAD(+) binding site. Residue Lys176 is the Proton acceptor of the active site. Residues Glu247, Asp248, and Asp271 each contribute to the a divalent metal cation site. NAD(+) is bound by residues Asp271 and Asn419.

It belongs to the malic enzymes family. Homotetramer. Mg(2+) is required as a cofactor. The cofactor is Mn(2+).

It catalyses the reaction (S)-malate + NAD(+) = pyruvate + CO2 + NADH. The catalysed reaction is oxaloacetate + H(+) = pyruvate + CO2. This chain is NAD-dependent malic enzyme, found in Acinetobacter baylyi (strain ATCC 33305 / BD413 / ADP1).